An 89-amino-acid polypeptide reads, in one-letter code: Small ribosomal subunit protein uS15 (89 aa).

The protein belongs to the universal ribosomal protein uS15 family. In terms of assembly, part of the 30S ribosomal subunit. Forms a bridge to the 50S subunit in the 70S ribosome, contacting the 23S rRNA.

Functionally, one of the primary rRNA binding proteins, it binds directly to 16S rRNA where it helps nucleate assembly of the platform of the 30S subunit by binding and bridging several RNA helices of the 16S rRNA. Its function is as follows. Forms an intersubunit bridge (bridge B4) with the 23S rRNA of the 50S subunit in the ribosome. This chain is Small ribosomal subunit protein uS15, found in Paraburkholderia phymatum (strain DSM 17167 / CIP 108236 / LMG 21445 / STM815) (Burkholderia phymatum).